The following is a 149-amino-acid chain: Large ribosomal subunit protein bL9 (149 aa).

Belongs to the bacterial ribosomal protein bL9 family.

Its function is as follows. Binds to the 23S rRNA. The chain is Large ribosomal subunit protein bL9 from Dichelobacter nodosus (strain VCS1703A).